The following is a 347-amino-acid chain: Membrane progestin receptor gamma-B (347 aa).

The Cytoplasmic segment spans residues 1 to 52 (MLSLIKLQRVFNVHQVPKAFHEDGIISGYRHPRSSATECVWSLFQLTNETLN). A helical transmembrane segment spans residues 53–73 (VWTHFLPTWYFLWKLMTVLLM). Over 74 to 81 (EDVWNEAY) the chain is Extracellular. A helical transmembrane segment spans residues 82–102 (TWPLLVFLFSCCVYPLASSCA). Residues 103–114 (HTFSSMSTRARH) are Cytoplasmic-facing. A helical transmembrane segment spans residues 115–135 (ICYFFDYGALSFYSLGSAISY). The Extracellular portion of the chain corresponds to 136 to 138 (SAY). A helical membrane pass occupies residues 139-159 (VFPDAWLSSSFHAYYISVAVF). Topologically, residues 160–201 (NTVLSTSLACYSRLGLPLLHYSHDIVERFSERQCPRMSKVLR) are cytoplasmic. A helical membrane pass occupies residues 202–222 (ILAFAYPYLFDNIPLFYRLFV). Residues 223–235 (CVGEGCTDNEANS) are Extracellular-facing. The chain crosses the membrane as a helical span at residues 236-256 (VHVQHTLLAFLTSFLFATHLP). The Cytoplasmic segment spans residues 257–314 (ERLAPGRFDYIGHSHQLFHVCAIIGTHFQMKAIEMDMGLRRSQLLASAPAISFNNTIG). Residues 315–335 (AALLCVSVSLGIICVYSLPLL) form a helical membrane-spanning segment. Residues 336-347 (YSSNPKNTANKE) lie on the Extracellular side of the membrane.

The protein belongs to the ADIPOR family.

It localises to the membrane. Functionally, steroid membrane receptor. Binds progesterone. May be involved in oocyte maturation. This chain is Membrane progestin receptor gamma-B, found in Danio rerio (Zebrafish).